The chain runs to 528 residues: Chaperonin GroEL, chloroplastic (528 aa).

ATP-binding positions include 29 to 32 (TLGP), 86 to 90 (DGTTT), glycine 414, 480 to 482 (DAA), and aspartate 496.

It belongs to the chaperonin (HSP60) family. In terms of assembly, forms a cylinder of 14 subunits composed of two heptameric rings stacked back-to-back. Interacts with the co-chaperonin GroES.

It localises to the plastid. The protein resides in the chloroplast. It catalyses the reaction ATP + H2O + a folded polypeptide = ADP + phosphate + an unfolded polypeptide.. In terms of biological role, together with its co-chaperonin GroES, plays an essential role in assisting protein folding. The GroEL-GroES system forms a nano-cage that allows encapsulation of the non-native substrate proteins and provides a physical environment optimized to promote and accelerate protein folding. This chain is Chaperonin GroEL, chloroplastic, found in Pyropia yezoensis (Susabi-nori).